The primary structure comprises 64 residues: Disintegrin (64 aa).

One can recognise a Disintegrin domain in the interval Asn-1–His-64. 4 disulfides stabilise this stretch: Cys-6–Cys-29, Cys-20–Cys-26, Cys-25–Cys-50, and Cys-38–Cys-57. A Cell attachment site; atypical (MLD) motif is present at residues Met-42–Asp-44.

Belongs to the disintegrin family. Dimeric disintegrin subfamily. As to quaternary structure, heterodimer; disulfide-linked. In terms of tissue distribution, expressed by the venom gland.

The protein localises to the secreted. Its function is as follows. Inhibits adhesion of cells expressing alpha-4/beta-1 (ITGA4/ITGB1) and alpha-4/beta-7 (ITGA4/ITGB7) integrins to the natural ligands vascular cell adhesion molecule 1 (VCAM-1) and mucosal addressin cell adhesion molecule 1 (MADCAM-1). In Echis carinatus (Saw-scaled viper), this protein is Disintegrin.